The primary structure comprises 322 residues: Acetyl-coenzyme A carboxylase carboxyl transferase subunit alpha (322 aa).

Residues 39–293 enclose the CoA carboxyltransferase C-terminal domain; it reads RLAAKSQQLT…KRALAESLRQ (255 aa).

It belongs to the AccA family. As to quaternary structure, acetyl-CoA carboxylase is a heterohexamer composed of biotin carboxyl carrier protein (AccB), biotin carboxylase (AccC) and two subunits each of ACCase subunit alpha (AccA) and ACCase subunit beta (AccD).

Its subcellular location is the cytoplasm. It catalyses the reaction N(6)-carboxybiotinyl-L-lysyl-[protein] + acetyl-CoA = N(6)-biotinyl-L-lysyl-[protein] + malonyl-CoA. It functions in the pathway lipid metabolism; malonyl-CoA biosynthesis; malonyl-CoA from acetyl-CoA: step 1/1. Component of the acetyl coenzyme A carboxylase (ACC) complex. First, biotin carboxylase catalyzes the carboxylation of biotin on its carrier protein (BCCP) and then the CO(2) group is transferred by the carboxyltransferase to acetyl-CoA to form malonyl-CoA. This is Acetyl-coenzyme A carboxylase carboxyl transferase subunit alpha from Ralstonia nicotianae (strain ATCC BAA-1114 / GMI1000) (Ralstonia solanacearum).